A 190-amino-acid chain; its full sequence is MSIILGIDPGSRVTGYGVIRQTGRHLEYLGSGAIRTQVEDLPTRLKRIYAGVTEIITQFQPDMFAIEQVFMAKNADSALKLGQARGTAIVAAVNHDLPVFEYAARLVKQTVVGIGSADKVQVQEMVTRILKLSDKPQADAADALAIAITHAHSIQHSLHIANSVKMTETQEKMTALLKTRYSRGRFRLKI.

Catalysis depends on residues Asp8, Glu67, and Asp139. Residues Asp8, Glu67, and Asp139 each contribute to the Mg(2+) site.

Belongs to the RuvC family. Homodimer which binds Holliday junction (HJ) DNA. The HJ becomes 2-fold symmetrical on binding to RuvC with unstacked arms; it has a different conformation from HJ DNA in complex with RuvA. In the full resolvosome a probable DNA-RuvA(4)-RuvB(12)-RuvC(2) complex forms which resolves the HJ. Mg(2+) is required as a cofactor.

The protein localises to the cytoplasm. It carries out the reaction Endonucleolytic cleavage at a junction such as a reciprocal single-stranded crossover between two homologous DNA duplexes (Holliday junction).. The RuvA-RuvB-RuvC complex processes Holliday junction (HJ) DNA during genetic recombination and DNA repair. Endonuclease that resolves HJ intermediates. Cleaves cruciform DNA by making single-stranded nicks across the HJ at symmetrical positions within the homologous arms, yielding a 5'-phosphate and a 3'-hydroxyl group; requires a central core of homology in the junction. The consensus cleavage sequence is 5'-(A/T)TT(C/G)-3'. Cleavage occurs on the 3'-side of the TT dinucleotide at the point of strand exchange. HJ branch migration catalyzed by RuvA-RuvB allows RuvC to scan DNA until it finds its consensus sequence, where it cleaves and resolves the cruciform DNA. This chain is Crossover junction endodeoxyribonuclease RuvC, found in Haemophilus influenzae (strain PittGG).